The sequence spans 37 residues: Large ribosomal subunit protein bL36c (37 aa).

Belongs to the bacterial ribosomal protein bL36 family.

Its subcellular location is the plastid. It localises to the chloroplast. This Pelargonium hortorum (Common geranium) protein is Large ribosomal subunit protein bL36c.